The chain runs to 321 residues: MATTTTTQGQQTAIDSAVLDDIIRRLTEVRLARPGKQVQLSEAEIKQLCTTARDIFLQQPNLLELEAPIKICGDIHGQYSDLLRLFEYGGFPPSANYLFLGDYVDRGKQSLETICLLLAYKIKYPGNFFLLRGNHECASINRIYGFYDECKRRFNVRVWKVFTDCFNCLPVAALIDDKILCMHGGLSPDLDHLDEIRNLPRPTMIPDTGLLCDLLWSDPGKDVKGWGMNDRGVSYTFGPDKVSEFLTKHDLDLVCRAHQVVEDGYEFFADRQLVTVFSAPNYCGEFDNAGAMMSVDENLMCSFQILKPAEKKTKFMMSTKI.

N-acetylalanine is present on Ala2. 4 residues coordinate Mn(2+): Asp74, His76, Asp102, and Asn134. His135 serves as the catalytic Proton donor. Residues His183 and His258 each contribute to the Mn(2+) site.

The protein belongs to the PPP phosphatase family. PP-1 subfamily. Interacts with the DELLA proteins RGA and GAI. Interacts with PIF3 and PIF5. Interacts with the auxin efflux carrier PIN1. Requires Mn(2+) as cofactor. Expressed in the vasculature of roots and cotyledons, tips of leaves, guard cells, bases of trichomes, pistils and stamen filaments.

The protein localises to the nucleus. The protein resides in the cytoplasm. It carries out the reaction O-phospho-L-seryl-[protein] + H2O = L-seryl-[protein] + phosphate. It catalyses the reaction O-phospho-L-threonyl-[protein] + H2O = L-threonyl-[protein] + phosphate. Its activity is regulated as follows. Phosphatase activity is strongly reduced by the protein phosphatase inhibitor 2 (I-2). In terms of biological role, serine/threonine-protein phosphatase that possesses phosphatase activity toward para-nitrophenyl phosphate (pNPP) in vitro. Acts as a positive regulator in the gibberellin (GA) signaling pathway to regulate plant growth and development. Promotes the GA-induced and proteasomal-dependent degradation of the DELLA proteins RGA and GAI by directly binding and dephosphorylating these proteins. Involved in the regulation of phytochrome B (phyB) signaling pathway that controls photomorphogenesis. Promotes the proteasomal-dependent degradation of PIF5 factor by directly binding and dephosphorylating this protein. Involved in the regulation of pavement cell (PC) interdigitation by modulating the auxin efflux carrier PIN1 polarity and endocytic trafficking. Regulates PIN1 polar targeting through direct binding and dephosphorylation. Acts antagonistically with PID in regulating PC development. The polypeptide is Serine/threonine-protein phosphatase PP1 isozyme 4 (Arabidopsis thaliana (Mouse-ear cress)).